Reading from the N-terminus, the 158-residue chain is Serglycin (158 aa).

The signal sequence occupies residues 1-27 (MMQKLLKCSRLVLALALILVLESSVQG). C40 and C49 form a disulfide bridge. O-linked (Xyl...) (glycosaminoglycan) serine glycosylation is found at S94 and S96. 9 tandem repeats follow at residues 94 to 95 (SG), 96 to 97 (SG), 98 to 99 (FG), 100 to 101 (SG), 102 to 103 (SG), 104 to 105 (SG), 106 to 107 (SG), 108 to 109 (SG), and 110 to 111 (SG). Positions 94-111 (SGSGFGSGSGSGSGSGSG) are 9 X 2 AA tandem repeats of [SF]-G. Residues S100, S102, S104, S106, S108, and S110 are each glycosylated (O-linked (Xyl...) (glycosaminoglycan) serine). The segment at 134–158 (RSLDRNLPSDSQDLGQHGLEEDFML) is disordered.

This sequence belongs to the serglycin family. As to quaternary structure, binds to activated CD44 and to GZMB. In terms of processing, O-glycosylated; contains chondroitin sulfate and heparan sulfate.

The protein localises to the cytoplasmic granule. Its subcellular location is the cytolytic granule. It localises to the secreted. It is found in the extracellular space. The protein resides in the golgi apparatus. Its function is as follows. Plays a role in formation of mast cell secretory granules and mediates storage of various compounds in secretory vesicles. Required for storage of some proteases in both connective tissue and mucosal mast cells and for storage of granzyme B in T-lymphocytes. Plays a role in localizing neutrophil elastase in azurophil granules of neutrophils. Mediates processing of MMP2. Plays a role in cytotoxic cell granule-mediated apoptosis by forming a complex with granzyme B which is delivered to cells by perforin to induce apoptosis. Regulates the secretion of TNF-alpha and may also regulate protease secretion. Inhibits bone mineralization. This is Serglycin (SRGN) from Homo sapiens (Human).